Here is a 374-residue protein sequence, read N- to C-terminus: Putative F-box protein At3g17480 (374 aa).

Positions 6-52 (SSPMSVLTEDLVEDILSRVPATSLVRLRSTCKQWNAILNDRRFIKKH) constitute an F-box domain.

In Arabidopsis thaliana (Mouse-ear cress), this protein is Putative F-box protein At3g17480.